The chain runs to 353 residues: Tectonin-2 (353 aa).

Positions 44–93 constitute a Ricin B-type lectin domain; it reads WIFDNDGYIRLAANHNLVLDVNGGAAKEGNTVLSYPDKKDHAKNQLWVNK. 6 repeat units span residues 138 to 173, 174 to 210, 211 to 247, 248 to 282, 283 to 318, and 319 to 353. Residues 138-353 are 6 X approximate tandem repeats; sequence SAWERHEGEL…SAHNIYKALL (216 aa).

Belongs to the tectonin family.

It localises to the cell surface. It is found in the cytoplasmic vesicle membrane. Probably involved in bacterial recognition. May be a lectin that function as part of a transmembrane signaling complex during phagocytosis. In Physarum polycephalum (Slime mold), this protein is Tectonin-2 (TECB).